Here is a 672-residue protein sequence, read N- to C-terminus: Flap endonuclease 1 (672 aa).

The N-domain stretch occupies residues 1 to 106 (MGIKGLIGFL…QTLAKRKLLR (106 aa)). Aspartate 34 contacts Mg(2+). DNA is bound by residues arginine 47 and arginine 72. 5 residues coordinate Mg(2+): aspartate 88, glutamate 160, glutamate 162, aspartate 181, and aspartate 183. Positions 124–252 (AIRKYVGRTV…KTAYNLIKKH (129 aa)) are I-domain. DNA is bound at residue glutamate 160. Residues glycine 230 and aspartate 232 each coordinate DNA. Position 232 (aspartate 232) interacts with Mg(2+). The segment at 327–335 (TQLSLKSFF) is interaction with PCNA. The disordered stretch occupies residues 361 to 436 (VESAVDSTSD…DAKKRNKRVP (76 aa)). A compositionally biased stretch (basic and acidic residues) spans 370 to 382 (DDGKDEVPSDDKV).

The protein belongs to the XPG/RAD2 endonuclease family. FEN1 subfamily. In terms of assembly, interacts with PCNA. Three molecules of FEN1 bind to one PCNA trimer with each molecule binding to one PCNA monomer. PCNA stimulates the nuclease activity without altering cleavage specificity. It depends on Mg(2+) as a cofactor. Phosphorylated. Phosphorylation upon DNA damage induces relocalization to the nuclear plasma.

The protein resides in the nucleus. It localises to the nucleolus. The protein localises to the nucleoplasm. It is found in the mitochondrion. Structure-specific nuclease with 5'-flap endonuclease and 5'-3' exonuclease activities involved in DNA replication and repair. During DNA replication, cleaves the 5'-overhanging flap structure that is generated by displacement synthesis when DNA polymerase encounters the 5'-end of a downstream Okazaki fragment. It enters the flap from the 5'-end and then tracks to cleave the flap base, leaving a nick for ligation. Also involved in the long patch base excision repair (LP-BER) pathway, by cleaving within the apurinic/apyrimidinic (AP) site-terminated flap. Acts as a genome stabilization factor that prevents flaps from equilibrating into structures that lead to duplications and deletions. Also possesses 5'-3' exonuclease activity on nicked or gapped double-stranded DNA, and exhibits RNase H activity. Also involved in replication and repair of rDNA and in repairing mitochondrial DNA. This is Flap endonuclease 1 from Babesia bovis.